The chain runs to 174 residues: Large ribosomal subunit protein bL12cz (174 aa).

Residues 1 to 45 constitute a chloroplast transit peptide; it reads MASTTFSSAFSILSLPSSSPSPPPSPPRTLPVANRRRRAAAVAST. A disordered region spans residues 1–46; it reads MASTTFSSAFSILSLPSSSPSPPPSPPRTLPVANRRRRAAAVASTA. Low complexity predominate over residues 7-18; it reads SSAFSILSLPSS. The segment covering 19-29 has biased composition (pro residues); it reads SPSPPPSPPRT.

This sequence belongs to the bacterial ribosomal protein bL12 family.

It is found in the plastid. Its subcellular location is the chloroplast. In Secale cereale (Rye), this protein is Large ribosomal subunit protein bL12cz (RPL12-1).